The following is a 310-amino-acid chain: Proline-rich 28 kDa antigen (310 aa).

Residues 1 to 32 (MIQIARTWRVFAGGMATGFIGVVLVTAGKASA) form the signal peptide. Positions 278-310 (QAPAPAPGSAPVGLPGQAPGYPPAGTLTPVPPR) are disordered.

This sequence to M.leprae ML0031.

The sequence is that of Proline-rich 28 kDa antigen (mtc28) from Mycobacterium bovis (strain ATCC BAA-935 / AF2122/97).